A 577-amino-acid chain; its full sequence is Arginine--tRNA ligase (577 aa).

The short motif at 122 to 132 (PNVAKEMHVGH) is the 'HIGH' region element.

It belongs to the class-I aminoacyl-tRNA synthetase family. Monomer.

The protein resides in the cytoplasm. It carries out the reaction tRNA(Arg) + L-arginine + ATP = L-arginyl-tRNA(Arg) + AMP + diphosphate. The chain is Arginine--tRNA ligase from Aliivibrio fischeri (strain MJ11) (Vibrio fischeri).